A 478-amino-acid polypeptide reads, in one-letter code: PRAME family member 15 (478 aa).

An LRR 1; degenerate repeat occupies 99-126 (RWKLQVLDLQDVCENFWMVWSEAMAHGC). Residues 181–205 (HLCCKKLKILGMPFRNIRSILKMVN) form an LRR 2; degenerate repeat. Residues 206–232 (LDCIQEVEVNCKWVLPILTQFTPYLGH) form an LRR 3; degenerate repeat. The LRR 4; degenerate repeat unit spans residues 233 to 268 (MRNLQKLVLSHMDVSRYVSPEQKKEIVTQFTTQFLK). LRR repeat units lie at residues 269–294 (LRCL…LSCL), 295–326 (KTSL…SQLK), 327–347 (TLDL…QILL), 351–378 (AATL…ALSR), and 379–403 (CFEL…LLSH).

This sequence belongs to the PRAME family.

This is PRAME family member 15 from Homo sapiens (Human).